The sequence spans 228 residues: Ribosomal RNA small subunit methyltransferase G (228 aa).

S-adenosyl-L-methionine is bound by residues G82, L87, 105 to 107 (DAT), 133 to 134 (VE), and R147.

This sequence belongs to the methyltransferase superfamily. RNA methyltransferase RsmG family.

Its subcellular location is the cytoplasm. In terms of biological role, specifically methylates the N7 position of a guanine in 16S rRNA. The polypeptide is Ribosomal RNA small subunit methyltransferase G (Pelodictyon phaeoclathratiforme (strain DSM 5477 / BU-1)).